An 89-amino-acid chain; its full sequence is Small ribosomal subunit protein uS19 (89 aa).

This sequence belongs to the universal ribosomal protein uS19 family.

Its function is as follows. Protein S19 forms a complex with S13 that binds strongly to the 16S ribosomal RNA. This Akkermansia muciniphila (strain ATCC BAA-835 / DSM 22959 / JCM 33894 / BCRC 81048 / CCUG 64013 / CIP 107961 / Muc) protein is Small ribosomal subunit protein uS19.